A 142-amino-acid chain; its full sequence is FAD synthase (142 aa).

Residues T9–F10, H14–H17, and D92 contribute to the ATP site.

The protein belongs to the archaeal FAD synthase family. Homodimer. The cofactor is a divalent metal cation.

It carries out the reaction FMN + ATP + H(+) = FAD + diphosphate. Its pathway is cofactor biosynthesis; FAD biosynthesis; FAD from FMN: step 1/1. Its function is as follows. Catalyzes the transfer of the AMP portion of ATP to flavin mononucleotide (FMN) to produce flavin adenine dinucleotide (FAD) coenzyme. In Methanohalophilus mahii (strain ATCC 35705 / DSM 5219 / SLP), this protein is FAD synthase.